Reading from the N-terminus, the 282-residue chain is Parvulin-like PPIase (282 aa).

The signal sequence occupies residues 1–20 (MKKLSVIFLSVSMLSSIAFC). In terms of domain architecture, PpiC spans 138–231 (KEQIKVAHIL…FGWHIIKVLE (94 aa)).

The protein belongs to the PpiC/parvulin rotamase family.

The protein localises to the cell outer membrane. The catalysed reaction is [protein]-peptidylproline (omega=180) = [protein]-peptidylproline (omega=0). The sequence is that of Parvulin-like PPIase (plp) from Rickettsia typhi (strain ATCC VR-144 / Wilmington).